Consider the following 547-residue polypeptide: Inositol 1,4,5-trisphosphate receptor-interacting protein-like 1 (547 aa).

A signal peptide spans 1 to 22; it reads MAVISLMFLAVMYVVHHPLMVS. The Extracellular segment spans residues 23-96; the sequence is DRMDLDTLAR…PFQAGGQDGG (74 aa). A coiled-coil region spans residues 28 to 66; it reads DTLARSRQLEKRMSEEMRQLEMEFEERSRAAEQKQKVEN. The chain crosses the membrane as a helical span at residues 97 to 117; it reads PLGWILGNLWNAGLFCLFLIF. Residues 118–547 lie on the Cytoplasmic side of the membrane; it reads ELLRQSMQHE…LPCSPVAGGL (430 aa).

Belongs to the ITPRIP family.

The protein resides in the cell membrane. Its function is as follows. Functions as a ligand of CD3E, inhibiting TCR-CD3 complex signaling to regulate T cell activation. Induces stable CD3E-NCK1 binding, thereby preventing the CD3E-ZAP70 interaction and subsequently inhibiting the activation of the downstream ERK-NFkB signaling cascade and calcium influx. In Mus musculus (Mouse), this protein is Inositol 1,4,5-trisphosphate receptor-interacting protein-like 1 (Itpripl1).